The primary structure comprises 130 residues: Small ribosomal subunit protein uS8 (130 aa).

It belongs to the universal ribosomal protein uS8 family. Part of the 30S ribosomal subunit. Contacts proteins S5 and S12.

In terms of biological role, one of the primary rRNA binding proteins, it binds directly to 16S rRNA central domain where it helps coordinate assembly of the platform of the 30S subunit. This Pseudoalteromonas translucida (strain TAC 125) protein is Small ribosomal subunit protein uS8.